Consider the following 359-residue polypeptide: Norspermidine sensor (359 aa).

A signal peptide spans 1–33 (MTNFCNEWVSYSQMIKRFLSLMVLNTVCYQASA).

Belongs to the bacterial solute-binding protein PotD/PotF family.

The protein localises to the periplasm. Its function is as follows. Acts as a sensor of norspermidine and enhances biofilm formation. When complexed to norspermidine, could interact with the periplasmic portion of MbaA to regulate its enzymatic activity. This chain is Norspermidine sensor (nspS), found in Vibrio cholerae serotype O1 (strain ATCC 39315 / El Tor Inaba N16961).